The following is a 147-amino-acid chain: Large ribosomal subunit protein bL9 (147 aa).

The protein belongs to the bacterial ribosomal protein bL9 family.

Functionally, binds to the 23S rRNA. This Gemmatimonas aurantiaca (strain DSM 14586 / JCM 11422 / NBRC 100505 / T-27) protein is Large ribosomal subunit protein bL9.